Reading from the N-terminus, the 214-residue chain is Thiamine-phosphate synthase (214 aa).

Residues 37-41 (QYREK) and asparagine 73 contribute to the 4-amino-2-methyl-5-(diphosphooxymethyl)pyrimidine site. 2 residues coordinate Mg(2+): aspartate 74 and aspartate 93. Serine 112 is a 4-amino-2-methyl-5-(diphosphooxymethyl)pyrimidine binding site. 139–141 (TIS) lines the 2-[(2R,5Z)-2-carboxy-4-methylthiazol-5(2H)-ylidene]ethyl phosphate pocket. Lysine 142 serves as a coordination point for 4-amino-2-methyl-5-(diphosphooxymethyl)pyrimidine. 2-[(2R,5Z)-2-carboxy-4-methylthiazol-5(2H)-ylidene]ethyl phosphate is bound by residues glycine 171 and 191 to 192 (IS).

The protein belongs to the thiamine-phosphate synthase family. Mg(2+) serves as cofactor.

It carries out the reaction 2-[(2R,5Z)-2-carboxy-4-methylthiazol-5(2H)-ylidene]ethyl phosphate + 4-amino-2-methyl-5-(diphosphooxymethyl)pyrimidine + 2 H(+) = thiamine phosphate + CO2 + diphosphate. It catalyses the reaction 2-(2-carboxy-4-methylthiazol-5-yl)ethyl phosphate + 4-amino-2-methyl-5-(diphosphooxymethyl)pyrimidine + 2 H(+) = thiamine phosphate + CO2 + diphosphate. The catalysed reaction is 4-methyl-5-(2-phosphooxyethyl)-thiazole + 4-amino-2-methyl-5-(diphosphooxymethyl)pyrimidine + H(+) = thiamine phosphate + diphosphate. The protein operates within cofactor biosynthesis; thiamine diphosphate biosynthesis; thiamine phosphate from 4-amino-2-methyl-5-diphosphomethylpyrimidine and 4-methyl-5-(2-phosphoethyl)-thiazole: step 1/1. Condenses 4-methyl-5-(beta-hydroxyethyl)thiazole monophosphate (THZ-P) and 2-methyl-4-amino-5-hydroxymethyl pyrimidine pyrophosphate (HMP-PP) to form thiamine monophosphate (TMP). This is Thiamine-phosphate synthase from Listeria monocytogenes serovar 1/2a (strain ATCC BAA-679 / EGD-e).